The sequence spans 144 residues: Large ribosomal subunit protein uL15 (144 aa).

Residues Met-1–Gly-52 form a disordered region. Residues Arg-21–Gly-31 show a composition bias toward gly residues.

This sequence belongs to the universal ribosomal protein uL15 family. In terms of assembly, part of the 50S ribosomal subunit.

Functionally, binds to the 23S rRNA. The polypeptide is Large ribosomal subunit protein uL15 (Actinobacillus pleuropneumoniae serotype 5b (strain L20)).